Here is an 885-residue protein sequence, read N- to C-terminus: Envelope glycoprotein gp160 (885 aa).

An N-terminal signal peptide occupies residues 1 to 23 (MGCLGNQLLIALLLVSVLEICCV). At 24 to 700 (QYVTVFYGVP…TSWIRYIQYG (677 aa)) the chain is on the extracellular side. An N-linked (GlcNAc...) asparagine; by host glycan is attached at asparagine 37. Cysteine 44 and cysteine 57 form a disulfide bridge. N-linked (GlcNAc...) asparagine; by host glycans are attached at residues asparagine 70, asparagine 114, asparagine 148, asparagine 156, asparagine 173, asparagine 186, asparagine 201, asparagine 213, asparagine 245, asparagine 255, asparagine 279, asparagine 285, asparagine 296, asparagine 307, asparagine 317, asparagine 372, and asparagine 378. 5 disulfide bridges follow: cysteine 101–cysteine 221, cysteine 108–cysteine 212, cysteine 113–cysteine 170, cysteine 234–cysteine 264, and cysteine 244–cysteine 256. Residues 113-169 (CNKTETDRWGLTGNAGTTTTAITTTATPSVAENVINESNPCIKNNSCAGLEQEPMIG) are V1. The segment at 170–212 (CKFNMTGLNRDKKKEYNETWYSRDLICEQSANESESKCYMHHC) is V2. The interval 312–344 (CRRPENKTVLPVTIMSGLVFHSQPINERPKQAW) is V3. The cysteines at positions 312 and 345 are disulfide-linked. Cystine bridges form between cysteine 396–cysteine 465 and cysteine 403–cysteine 438. The V4 stretch occupies residues 403–438 (CKMNWFLNWVEDRDQKGGRWKQQNRKEQQKKNYVPC). N-linked (GlcNAc...) asparagine; by host glycans are attached at residues asparagine 466, asparagine 482, and asparagine 485. The V5 stretch occupies residues 481-488 (SNETNITM). The interval 532-552 (GVFVLGFLGFLATAGSAMGAA) is fusion peptide. Positions 595 to 611 (LQTRVTAIEKYLKDQAQ) are immunosuppression. 3 N-linked (GlcNAc...) asparagine; by host glycosylation sites follow: asparagine 631, asparagine 640, and asparagine 656. Positions 640 to 672 (NMTWQEWERQVDFLEANITQLLEEAQIQQEKNM) form a coiled coil. Residues 677-698 (KLNSWDIFGNWFDLTSWIRYIQ) are MPER; binding to GalCer. A helical transmembrane segment spans residues 701 to 721 (VLIVLGVIGLRIVIYVVQMLA). Residues 722-885 (RLRQGYRPVF…IRQGLELTLL (164 aa)) lie on the Cytoplasmic side of the membrane. The YXXV motif; contains endocytosis signal motif lies at 727–730 (YRPV). The interval 743-764 (IHKGQEPPTKEGEEGDGGDRGG) is disordered. Basic and acidic residues predominate over residues 745 to 764 (KGQEPPTKEGEEGDGGDRGG). A lipid anchor (S-palmitoyl cysteine; by host) is attached at cysteine 793. The Di-leucine internalization motif signature appears at 884–885 (LL).

The mature envelope protein (Env) consists of a homotrimer of non-covalently associated gp120-gp41 heterodimers. The resulting complex protrudes from the virus surface as a spike. Interacts with host CD4 and CCR5. Gp120 also interacts with the C-type lectins CD209/DC-SIGN and CLEC4M/DC-SIGNR (collectively referred to as DC-SIGN(R)). As to quaternary structure, the mature envelope protein (Env) consists of a homotrimer of non-covalently associated gp120-gp41 heterodimers. The resulting complex protrudes from the virus surface as a spike. Post-translationally, specific enzymatic cleavages in vivo yield mature proteins. Envelope glycoproteins are synthesized as an inactive precursor that is heavily N-glycosylated and processed likely by host cell furin in the Golgi to yield the mature SU and TM proteins. The cleavage site between SU and TM requires the minimal sequence [KR]-X-[KR]-R. In terms of processing, palmitoylation of the transmembrane protein and of Env polyprotein (prior to its proteolytic cleavage) is essential for their association with host cell membrane lipid rafts. Palmitoylation is therefore required for envelope trafficking to classical lipid rafts, but not for viral replication.

It is found in the virion membrane. The protein localises to the host cell membrane. The protein resides in the host endosome membrane. The surface protein gp120 (SU) attaches the virus to the host lymphoid cell by binding to the primary receptor CD4. This interaction induces a structural rearrangement creating a high affinity binding site for a chemokine coreceptor like CCR5. This peculiar 2 stage receptor-interaction strategy allows gp120 to maintain the highly conserved coreceptor-binding site in a cryptic conformation, protected from neutralizing antibodies. These changes are transmitted to the transmembrane protein gp41 and are thought to activate its fusogenic potential by unmasking its fusion peptide. Its function is as follows. Surface protein gp120 (SU) may target the virus to gut-associated lymphoid tissue (GALT) by binding host ITGA4/ITGB7 (alpha-4/beta-7 integrins), a complex that mediates T-cell migration to the GALT. Interaction between gp120 and ITGA4/ITGB7 would allow the virus to enter GALT early in the infection, infecting and killing most of GALT's resting CD4+ T-cells. This T-cell depletion is believed to be the major insult to the host immune system leading to AIDS. Functionally, the surface protein gp120 is a ligand for CD209/DC-SIGN and CLEC4M/DC-SIGNR, which are respectively found on dendritic cells (DCs), and on endothelial cells of liver sinusoids and lymph node sinuses. These interactions allow capture of viral particles at mucosal surfaces by these cells and subsequent transmission to permissive cells. DCs are professional antigen presenting cells, critical for host immunity by inducing specific immune responses against a broad variety of pathogens. They act as sentinels in various tissues where they take up antigen, process it, and present it to T-cells following migration to lymphoid organs. SIV subverts the migration properties of dendritic cells to gain access to CD4+ T-cells in lymph nodes. Virus transmission to permissive T-cells occurs either in trans (without DCs infection, through viral capture and transmission), or in cis (following DCs productive infection, through the usual CD4-gp120 interaction), thereby inducing a robust infection. In trans infection, bound virions remain infectious over days and it is proposed that they are not degraded, but protected in non-lysosomal acidic organelles within the DCs close to the cell membrane thus contributing to the viral infectious potential during DCs' migration from the periphery to the lymphoid tissues. On arrival at lymphoid tissues, intact virions recycle back to DCs' cell surface allowing virus transmission to CD4+ T-cells. Virion capture also seems to lead to MHC-II-restricted viral antigen presentation, and probably to the activation of SIV-specific CD4+ cells. In terms of biological role, the transmembrane protein gp41 (TM) acts as a class I viral fusion protein. Under the current model, the protein has at least 3 conformational states: pre-fusion native state, pre-hairpin intermediate state, and post-fusion hairpin state. During fusion of viral and target intracellular membranes, the coiled coil regions (heptad repeats) assume a trimer-of-hairpins structure, positioning the fusion peptide in close proximity to the C-terminal region of the ectodomain. The formation of this structure appears to drive apposition and subsequent fusion of viral and target cell membranes. Complete fusion occurs in host cell endosomes. The virus undergoes clathrin-dependent internalization long before endosomal fusion, thus minimizing the surface exposure of conserved viral epitopes during fusion and reducing the efficacy of inhibitors targeting these epitopes. Membranes fusion leads to delivery of the nucleocapsid into the cytoplasm. The envelope glycoprotein gp160 precursor down-modulates cell surface CD4 antigen by interacting with it in the endoplasmic reticulum and blocking its transport to the cell surface. Its function is as follows. The gp120-gp41 heterodimer allows rapid transcytosis of the virus through CD4 negative cells such as simple epithelial monolayers of the intestinal, rectal and endocervical epithelial barriers. Both gp120 and gp41 specifically recognize glycosphingolipids galactosyl-ceramide (GalCer) or 3' sulfo-galactosyl-ceramide (GalS) present in the lipid rafts structures of epithelial cells. Binding to these alternative receptors allows the rapid transcytosis of the virus through the epithelial cells. This transcytotic vesicle-mediated transport of virions from the apical side to the basolateral side of the epithelial cells does not involve infection of the cells themselves. This Cercopithecidae (Old World monkeys) protein is Envelope glycoprotein gp160 (env).